We begin with the raw amino-acid sequence, 492 residues long: Heat shock factor protein 4 (492 aa).

Residues 17–121 (VPAFLGKLWA…QLLERVRRKV (105 aa)) mediate DNA binding. The tract at residues 129-203 (GRWRPEDLGR…GPLQTGSSGA (75 aa)) is hydrophobic repeat HR-A/B. The interval 245–323 (LPETTLGLSS…ECDFCVTAPP (79 aa)) is interactions with DUSP26, MAPK1 and MAPK2. Residues 250–286 (LGLSSSHRTRGPIISDIHEDSPSPDGTRLSPSSGGRR) are disordered. A Glycyl lysine isopeptide (Lys-Gly) (interchain with G-Cter in SUMO) cross-link involves residue lysine 294. Serine 299 carries the post-translational modification Phosphoserine. Residues 337 to 378 (KGNFSPEGPRNAQQPEPRGPREVPDRGTLGLDRGARSPENLL) are disordered. The tract at residues 365-390 (LGLDRGARSPENLLPPMLLRAPPESV) is hydrophobic repeat HR-C.

It belongs to the HSF family. In terms of assembly, homotrimer. Exhibits constitutive DNA binding and forms trimers even in the absence of stress. Interacts with ALKBH4, DUSP26, MAPK1, MAPK2, MAPK8 and MAP kinase p38. Post-translationally, phosphorylated mainly on serine residues. Phosphorylation on Ser-299 promotes sumoylation on Lys-294. Constitutively sumoylated. Sumoylation represses the transcriptional activity and is promoted by phosphorylation on Ser-299.

It localises to the nucleus. Its function is as follows. Heat-shock transcription factor that specifically binds heat shock promoter elements (HSE). Required for denucleation and organelle rupture and degradation that occur during eye lens terminal differentiation, when fiber cells that compose the lens degrade all membrane-bound organelles in order to provide lens with transparency to allow the passage of light. In this process, may regulate denucleation of lens fiber cells in part by activating DNASE2B transcription. May be involved in DNA repair through the transcriptional regulation of RAD51. May up-regulate p53/TP53 protein in eye lens fiber cells, possibly through protein stabilization. In the eye lens, controls the expression of alpha-crystallin B chain/CRYAB and consequently may be involved in the regulation of lysosomal acidification. The polypeptide is Heat shock factor protein 4 (HSF4) (Canis lupus familiaris (Dog)).